A 342-amino-acid polypeptide reads, in one-letter code: Delta-aminolevulinic acid dehydratase (342 aa).

The Zn(2+) site is built by cysteine 133, cysteine 135, and cysteine 143. Residue lysine 210 is the Schiff-base intermediate with substrate of the active site. Residues arginine 220 and arginine 232 each contribute to the 5-aminolevulinate site. Serine 254 is subject to Phosphoserine. Catalysis depends on lysine 263, which acts as the Schiff-base intermediate with substrate. Residues serine 290 and tyrosine 329 each contribute to the 5-aminolevulinate site.

It belongs to the ALAD family. Homooctamer. Zn(2+) serves as cofactor.

It carries out the reaction 2 5-aminolevulinate = porphobilinogen + 2 H2O + H(+). Its pathway is porphyrin-containing compound metabolism; protoporphyrin-IX biosynthesis; coproporphyrinogen-III from 5-aminolevulinate: step 1/4. Its activity is regulated as follows. Inhibited by divalent lead ions. Functionally, catalyzes an early step in the biosynthesis of tetrapyrroles. Binds two molecules of 5-aminolevulinate per subunit, each at a distinct site, and catalyzes their condensation to form porphobilinogen. The protein is Delta-aminolevulinic acid dehydratase (HEM2) of Saccharomyces cerevisiae (strain ATCC 204508 / S288c) (Baker's yeast).